Consider the following 263-residue polypeptide: Acetylglutamate kinase (263 aa).

Residues 48–49 (GG), Arg-70, and Asn-162 each bind substrate.

The protein belongs to the acetylglutamate kinase family. ArgB subfamily.

It localises to the cytoplasm. The enzyme catalyses N-acetyl-L-glutamate + ATP = N-acetyl-L-glutamyl 5-phosphate + ADP. Its pathway is amino-acid biosynthesis; L-arginine biosynthesis; N(2)-acetyl-L-ornithine from L-glutamate: step 2/4. In terms of biological role, catalyzes the ATP-dependent phosphorylation of N-acetyl-L-glutamate. This chain is Acetylglutamate kinase, found in Shewanella sediminis (strain HAW-EB3).